The chain runs to 142 residues: Ribosome-binding factor A (142 aa).

A compositionally biased stretch (basic and acidic residues) spans 120–130 (EVRRDIDHAPA). Residues 120-142 (EVRRDIDHAPAEDEFPTDGDDGQ) are disordered. The span at 131-142 (EDEFPTDGDDGQ) shows a compositional bias: acidic residues.

This sequence belongs to the RbfA family. In terms of assembly, monomer. Binds 30S ribosomal subunits, but not 50S ribosomal subunits or 70S ribosomes.

The protein localises to the cytoplasm. In terms of biological role, one of several proteins that assist in the late maturation steps of the functional core of the 30S ribosomal subunit. Associates with free 30S ribosomal subunits (but not with 30S subunits that are part of 70S ribosomes or polysomes). Required for efficient processing of 16S rRNA. May interact with the 5'-terminal helix region of 16S rRNA. This chain is Ribosome-binding factor A, found in Paramagnetospirillum magneticum (strain ATCC 700264 / AMB-1) (Magnetospirillum magneticum).